Here is a 264-residue protein sequence, read N- to C-terminus: NAD kinase 1 (264 aa).

D45 acts as the Proton acceptor in catalysis. NAD(+) contacts are provided by residues 45-46, 122-123, R148, D150, 161-166, and A185; these read DG, NE, and TAYNKS.

It belongs to the NAD kinase family. It depends on a divalent metal cation as a cofactor.

It localises to the cytoplasm. The catalysed reaction is NAD(+) + ATP = ADP + NADP(+) + H(+). In terms of biological role, involved in the regulation of the intracellular balance of NAD and NADP, and is a key enzyme in the biosynthesis of NADP. Catalyzes specifically the phosphorylation on 2'-hydroxyl of the adenosine moiety of NAD to yield NADP. In Listeria innocua serovar 6a (strain ATCC BAA-680 / CLIP 11262), this protein is NAD kinase 1.